We begin with the raw amino-acid sequence, 165 residues long: Protein SprT (165 aa).

Positions 22–163 (LAQANLKLDR…RCVHCGEPLV (142 aa)) constitute a SprT-like domain. Position 78 (histidine 78) interacts with Zn(2+). Glutamate 79 is a catalytic residue. Residue histidine 82 coordinates Zn(2+).

Belongs to the SprT family. Zn(2+) is required as a cofactor.

The protein resides in the cytoplasm. This chain is Protein SprT, found in Salmonella paratyphi C (strain RKS4594).